We begin with the raw amino-acid sequence, 1253 residues long: Methionine synthase (1253 aa).

The Hcy-binding domain occupies 6–326 (QDEIEAILRK…DHIREIAEAV (321 aa)). Positions 248, 311, and 312 each coordinate Zn(2+). The Pterin-binding domain maps to 359–620 (FVNIGERCNV…IHKDLLQLCE (262 aa)). Residues 370–372 (GSR), aspartate 437, asparagine 458, aspartate 525, asparagine 567, arginine 573, and arginine 579 each bind (6S)-5,6,7,8-tetrahydrofolate. Residues 650–747 (QTDEWRNGSI…FMEKEREEAR (98 aa)) enclose the B12-binding N-terminal domain. Methylcob(III)alamin is bound by residues glutamate 697, 770-774 (GDVHD), histidine 773, serine 818, threonine 822, and alanine 874. The B12-binding domain occupies 760–895 (QGTIVLATVK…DENLRDDYFE (136 aa)). An AdoMet activation domain is found at 911–1253 (SLKERKYVPL…LGPILGYDTD (343 aa)). Residues aspartate 962, arginine 1160, and 1215-1216 (YF) each bind S-adenosyl-L-methionine. Phosphothreonine is present on threonine 1252.

It belongs to the vitamin-B12 dependent methionine synthase family. In terms of assembly, monomer. Dimer. Forms a multiprotein complex with MMACHC, MMADHC and MTRR. It depends on methylcob(III)alamin as a cofactor. The cofactor is Zn(2+).

It localises to the cytoplasm. The catalysed reaction is (6S)-5-methyl-5,6,7,8-tetrahydrofolate + L-homocysteine = (6S)-5,6,7,8-tetrahydrofolate + L-methionine. It participates in amino-acid biosynthesis; L-methionine biosynthesis via de novo pathway; L-methionine from L-homocysteine (MetH route): step 1/1. Its function is as follows. Catalyzes the transfer of a methyl group from methylcob(III)alamin (MeCbl) to homocysteine, yielding enzyme-bound cob(I)alamin and methionine in the cytosol. MeCbl is an active form of cobalamin (vitamin B12) used as a cofactor for methionine biosynthesis. Cob(I)alamin form is regenerated to MeCbl by a transfer of a methyl group from 5-methyltetrahydrofolate. The processing of cobalamin in the cytosol occurs in a multiprotein complex composed of at least MMACHC, MMADHC, MTRR (methionine synthase reductase) and MTR which may contribute to shuttle safely and efficiently cobalamin towards MTR in order to produce methionine. The polypeptide is Methionine synthase (Mus musculus (Mouse)).